The chain runs to 473 residues: MEGKGPSFKVIIVGASVTGLTLAHCLHRAGIDYVVLEKHHEVHPPIGAAVAILPNGGRIMEQLGIFRHIEDRCQPFQRVHLCFQDGFYYDSLSPSVVLKRFGLKFAALERTQLLEILYTHLPDKSRVLTSKGVVRITPHGNKMSVTTADGDEFQGDLVVGADGVHSVTRREMWRIANIEQPGLIPFKEQASMSVEFSCIFGMSNPIPGRKHWQHIIRIGPGFTFLIFPAAGDSLFWVLIEKLPHKYIYPDVPRFSQEDAVTRCEAAASQPVWQEVRFRDIWAQRRGFRMVALEENLFRTWHHGRIICIGDSISKMTPNIGQGANTAIEAAAGLANVIYAITQNHHQPSDDTIHRALANFSERHRKRLDAIHLESRWITRLEACQGWVVTAFTRYVAPHCGDLFALGVVRNSYNGEVLQFLPLTERSGKHWPKLEWWNTWGLSKWQEFGERLVYCFGVVILLWISWAVFNVNQL.

Positions 37, 51, and 110 each coordinate FAD. Residues 218 to 238 form a helical membrane-spanning segment; it reads IGPGFTFLIFPAAGDSLFWVL. D310 and A323 together coordinate FAD. N358 carries an N-linked (GlcNAc...) asparagine glycan. A helical membrane pass occupies residues 451-471; that stretch reads LVYCFGVVILLWISWAVFNVN.

The protein belongs to the paxM FAD-dependent monooxygenase family. It depends on FAD as a cofactor.

The protein resides in the membrane. Its pathway is mycotoxin biosynthesis. In terms of biological role, FAD-dependent monooxygenase; part of the gene cluster that mediates the biosynthesis of citreoviridin, an inhibitor of the of F1-ATPase beta-subunit. The HR-PKS ctvA accepts acetyl-CoA as the starter unit and catalyzes eight iterations of malonyl-CoA extension and four iterations of SAM-dependent methylation at C4, C12, C14, and C16. The KR and DH domains selectively act on the first six iterations to generate the hexaene chain. In the last three iterations, the KR and DH domains terminate their functions to yield a beta,delta-diketo ester moiety, which then undergoes intramolecular cyclization to yield an alpha-pyrone intermediate. Subsequently, ctvB methylates the alpha-pyrone hydroxyl group to generate citreomontanin. In order to form the tetrahydrofuran ring with the correct stereochemistry, the terminal alkenes of citreomontanin need to undergo isomerization to yield a (17Z)-hexaene, a step that could be catalyzed by ctvC. The (17Z)-hexaene then undergoes bisepoxidation by ctvC to form a (17R,16R,15S,14R)-bisepoxide moiety. Lastly, ctvD acts as a regioselective hydrolase to form the tetrahydrofuran ring with the substituents in the correct absolute configuration, completing the biosynthesis of citreoviridin. The sequence is that of FAD-dependent monooxygenase ctvC from Aspergillus terreus (strain NIH 2624 / FGSC A1156).